A 173-amino-acid polypeptide reads, in one-letter code: Histone deacetylase complex subunit SAP30 homolog (173 aa).

The Atypical zinc finger occupies 21–69; it reads CCLLDDGDRCRNQAGNASYSKRIQKTVTQRRLKLSIDTAARHIYICDFH.

The protein belongs to the SAP30 family. In terms of assembly, component of the class 1 Sin3-histone deacetylase complex (HDAC).

It localises to the nucleus. Its function is as follows. Required for the function of the class 1 Sin3-histone deacetylase complex (HDAC). The polypeptide is Histone deacetylase complex subunit SAP30 homolog (Aedes aegypti (Yellowfever mosquito)).